A 485-amino-acid polypeptide reads, in one-letter code: Ulvan lyase (485 aa).

The signal sequence occupies residues 1-33; sequence MIRNDTMLKGQFVLKKTQIALSAALMGSVLLTG. Cysteine 34 carries N-palmitoyl cysteine lipidation. Cysteine 34 is lipidated: S-diacylglycerol cysteine. Substrate-binding residues include asparagine 64 and asparagine 126. The interval 108 to 128 is disordered; it reads FKAGTSELGRRDGGKKFDNHG. Residues 115-128 are compositionally biased toward basic and acidic residues; it reads LGRRDGGKKFDNHG. Residue histidine 127 is the Proton donor of the active site. Substrate contacts are provided by lysine 129 and histidine 147. Tyrosine 192 functions as the Proton acceptor in the catalytic mechanism. 3 residues coordinate substrate: arginine 208, histidine 212, and tyrosine 250. Histidine 212 is a binding site for Zn(2+). Residues histidine 268, cysteine 270, and histidine 282 each contribute to the Zn(2+) site. Residue histidine 282 coordinates substrate.

It belongs to the polysaccharide lyase 25 family.

The protein localises to the cell membrane. Functionally, ulvan lyase involved in ulvan degradation. Ulvan is the main polysaccharide component of the Ulvales (green seaweed) cell wall. It is composed of disaccharide building blocks comprising 3-sulfated rhamnose (Rha3S) linked to D-glucuronic acid (GlcA), L-iduronic acid (IduA), or D-xylose (Xyl). Ulvan lyase catalyzes the endolytic cleavage of the glycosidic bond between Rha3S and the uronic acids GlcA or IduA, producing oligosaccharides that have unsaturated 4-deoxy-L-threo-hex-4-enopyranosiduronic acid (deltaUA) at the non-reducing end. This results eventually in the degradation of the ulvan polysaccharide into deltaUA-Rha3S disaccharides and deltaUA-Rha3S-Xyl-Rha3S tetrasaccharides. The sequence is that of Ulvan lyase from Alteromonas sp. (strain LOR).